A 156-amino-acid polypeptide reads, in one-letter code: Putative NrdI-like protein (156 aa).

It belongs to the NrdI family.

The protein is Putative NrdI-like protein of Streptococcus pneumoniae serotype 4 (strain ATCC BAA-334 / TIGR4).